The sequence spans 230 residues: Urease accessory protein UreF (230 aa).

Belongs to the UreF family. As to quaternary structure, ureD, UreF and UreG form a complex that acts as a GTP-hydrolysis-dependent molecular chaperone, activating the urease apoprotein by helping to assemble the nickel containing metallocenter of UreC. The UreE protein probably delivers the nickel.

The protein resides in the cytoplasm. Required for maturation of urease via the functional incorporation of the urease nickel metallocenter. In Cupriavidus necator (strain ATCC 17699 / DSM 428 / KCTC 22496 / NCIMB 10442 / H16 / Stanier 337) (Ralstonia eutropha), this protein is Urease accessory protein UreF.